Consider the following 567-residue polypeptide: Proline--tRNA ligase (567 aa).

It belongs to the class-II aminoacyl-tRNA synthetase family. ProS type 1 subfamily. In terms of assembly, homodimer.

The protein resides in the cytoplasm. The enzyme catalyses tRNA(Pro) + L-proline + ATP = L-prolyl-tRNA(Pro) + AMP + diphosphate. Catalyzes the attachment of proline to tRNA(Pro) in a two-step reaction: proline is first activated by ATP to form Pro-AMP and then transferred to the acceptor end of tRNA(Pro). As ProRS can inadvertently accommodate and process non-cognate amino acids such as alanine and cysteine, to avoid such errors it has two additional distinct editing activities against alanine. One activity is designated as 'pretransfer' editing and involves the tRNA(Pro)-independent hydrolysis of activated Ala-AMP. The other activity is designated 'posttransfer' editing and involves deacylation of mischarged Ala-tRNA(Pro). The misacylated Cys-tRNA(Pro) is not edited by ProRS. The chain is Proline--tRNA ligase from Streptomyces coelicolor (strain ATCC BAA-471 / A3(2) / M145).